The primary structure comprises 473 residues: MKTLYSLRRFYHVETLFNGTLALAGRDQETTGFAWWAGNARLINLSGKLLGAHVAHAGLIVFWAGAMNLFEVAHFVPEKPMYEQGLILLPHLATLGWGVGPGGEVIDTFPYFVSGVLHVISSAVLGFGGIYHALLGPETLEESFPFFGYVWKDRNKMTTILGIHLILLGVGAFLLVFKALYFGGVYDTWAPGGGDVRKITNLTLSPSVIFGYLLKSPFGGEGWIVSVDDLEDIIGGHVWLGSICIFGGIWHILTKPFAWARRALVWSGEAYLSYSLAALSVCGFIACCFVWFNNTAYPSEFYGPTGPEASQAQAFTFLVRDQRLGANVGSAQGPTGLGKYLMRSPTGEVIFGGETMRFWDLRAPWLEPLRGPNGLDLSRLKKDIQPWQERRSAEYMTHAPLGSLNSVGGVATEINAVNYVSPRSWLSTSHFVLGFFLFVGHLWHAGRARAAAAGFEKGIDRDFEPVLSMTPLN.

The propeptide occupies 1–14 (MKTLYSLRRFYHVE). Threonine 15 is modified (N-acetylthreonine). The residue at position 15 (threonine 15) is a Phosphothreonine. Transmembrane regions (helical) follow at residues 69-93 (LFEVAHFVPEKPMYEQGLILLPHLA), 134-155 (LLGPETLEESFPFFGYVWKDRN), 178-200 (KALYFGGVYDTWAPGGGDVRKIT), 255-275 (KPFAWARRALVWSGEAYLSYS), and 291-312 (WFNNTAYPSEFYGPTGPEASQA). Position 367 (glutamate 367) interacts with [CaMn4O5] cluster. A helical membrane pass occupies residues 447–471 (RARAAAAGFEKGIDRDFEPVLSMTP).

It belongs to the PsbB/PsbC family. PsbC subfamily. PSII is composed of 1 copy each of membrane proteins PsbA, PsbB, PsbC, PsbD, PsbE, PsbF, PsbH, PsbI, PsbJ, PsbK, PsbL, PsbM, PsbT, PsbX, PsbY, PsbZ, Psb30/Ycf12, at least 3 peripheral proteins of the oxygen-evolving complex and a large number of cofactors. It forms dimeric complexes. Binds multiple chlorophylls and provides some of the ligands for the Ca-4Mn-5O cluster of the oxygen-evolving complex. It may also provide a ligand for a Cl- that is required for oxygen evolution. PSII binds additional chlorophylls, carotenoids and specific lipids. is required as a cofactor.

The protein localises to the plastid. Its subcellular location is the chloroplast thylakoid membrane. Functionally, one of the components of the core complex of photosystem II (PSII). It binds chlorophyll and helps catalyze the primary light-induced photochemical processes of PSII. PSII is a light-driven water:plastoquinone oxidoreductase, using light energy to abstract electrons from H(2)O, generating O(2) and a proton gradient subsequently used for ATP formation. The polypeptide is Photosystem II CP43 reaction center protein (Capsella bursa-pastoris (Shepherd's purse)).